Consider the following 526-residue polypeptide: MGKIIKSLSRFGKKVGNALTSNTAKKIYSTIGKAAERFAESEIGAATIDGLVQGSVHSIITGESYGESVKQAVLLNVLGTGEELPDPLSPGERGIQTKIKELEDEQRNELVRLKYNKEITKEFGKELEEVYDFMNGEAKEEEVVQEQYSMLCKAVDSYEKILKAEDSKMAMLARALQREASERSQDEIKMVKEYRQKIDALKNAIEIERDGMQEEAIQEIAGMTADVLEAASEEVPLIGAGMATAVATGRAIEGAYKLKKVINALSGIDLSHMRSPKIEPTIIATTLEHRFKEIPDEQLAVSVLNKKTAVTDNCNEIAHIKQEILPKFKQIMDEEKEIEGIEDKVIHPRVMMRFKIPRTQQPQIHIYAAPWDSDDVFFFHCVSHHHRNESFFLGFDLGIDVVHFEDLTSHWHALGLAQEASGRTLTEAYREFLNLSISSTYSSAIHARRMIRSRAVHPIFLGSMHYDITYEALKNNAQRIVYDEELQMHILRGPLHFQRRAILGALKFGVKILGDKIDVPLFLRNA.

Residues 1-42 (MGKIIKSLSRFGKKVGNALTSNTAKKIYSTIGKAAERFAESE) form an involved in membrane permeabilization region.

The protein belongs to the orbivirus VP5 family.

The protein resides in the virion. In terms of biological role, VP5 protein is one of the two proteins (with VP2) which constitute the virus particle outer capsid. Acts as a membrane permeabilization protein that mediates release of viral particles from endosomal compartments into the cytoplasm. Permeabilization activity is probably negatively regulated by VP2 and is triggered by endosomal degradation of VP2 and exposure to low pH. This Bluetongue virus 11 (isolate USA) (BTV 11) protein is Outer capsid protein VP5 (Segment-6).